Reading from the N-terminus, the 233-residue chain is Pyridoxal 5'-phosphate synthase subunit PdxT (233 aa).

Residue 61–63 participates in L-glutamine binding; that stretch reads GES. Residue cysteine 93 is the Nucleophile of the active site. L-glutamine is bound by residues arginine 127 and 163-164; that span reads IR. Residues histidine 212 and glutamate 214 each act as charge relay system in the active site.

It belongs to the glutaminase PdxT/SNO family. As to quaternary structure, in the presence of PdxS, forms a dodecamer of heterodimers. Only shows activity in the heterodimer.

The catalysed reaction is aldehydo-D-ribose 5-phosphate + D-glyceraldehyde 3-phosphate + L-glutamine = pyridoxal 5'-phosphate + L-glutamate + phosphate + 3 H2O + H(+). It carries out the reaction L-glutamine + H2O = L-glutamate + NH4(+). It participates in cofactor biosynthesis; pyridoxal 5'-phosphate biosynthesis. Catalyzes the hydrolysis of glutamine to glutamate and ammonia as part of the biosynthesis of pyridoxal 5'-phosphate. The resulting ammonia molecule is channeled to the active site of PdxS. The sequence is that of Pyridoxal 5'-phosphate synthase subunit PdxT from Paenarthrobacter aurescens (strain TC1).